A 505-amino-acid polypeptide reads, in one-letter code: Putative ribose/galactose/methyl galactoside import ATP-binding protein 1 (505 aa).

2 consecutive ABC transporter domains span residues 10 to 245 (LRLE…VGRS) and 256 to 501 (RPTD…SGYG). An ATP-binding site is contributed by 42-49 (GENGAGKS).

The protein belongs to the ABC transporter superfamily. Carbohydrate importer 2 (CUT2) (TC 3.A.1.2) family.

The protein resides in the cell inner membrane. The catalysed reaction is D-ribose(out) + ATP + H2O = D-ribose(in) + ADP + phosphate + H(+). The enzyme catalyses D-galactose(out) + ATP + H2O = D-galactose(in) + ADP + phosphate + H(+). Functionally, part of an ABC transporter complex involved in carbohydrate import. Could be involved in ribose, galactose and/or methyl galactoside import. Responsible for energy coupling to the transport system. The chain is Putative ribose/galactose/methyl galactoside import ATP-binding protein 1 from Agrobacterium fabrum (strain C58 / ATCC 33970) (Agrobacterium tumefaciens (strain C58)).